Reading from the N-terminus, the 766-residue chain is 5-methyltetrahydropteroyltriglutamate--homocysteine methyltransferase (766 aa).

5-methyltetrahydropteroyltri-L-glutamate-binding positions include 16-19 (RELK) and Lys117. L-homocysteine-binding positions include 442–444 (IGS) and Glu495. Residues 442 to 444 (IGS) and Glu495 contribute to the L-methionine site. Residues 526 to 527 (RC) and Trp572 contribute to the 5-methyltetrahydropteroyltri-L-glutamate site. Position 610 (Asp610) interacts with L-homocysteine. Asp610 is a binding site for L-methionine. Glu616 serves as a coordination point for 5-methyltetrahydropteroyltri-L-glutamate. Residues His652, Cys654, and Glu676 each coordinate Zn(2+). Residue His705 is the Proton donor of the active site. Zn(2+) is bound at residue Cys737.

It belongs to the vitamin-B12 independent methionine synthase family. Requires Zn(2+) as cofactor.

It carries out the reaction 5-methyltetrahydropteroyltri-L-glutamate + L-homocysteine = tetrahydropteroyltri-L-glutamate + L-methionine. Its pathway is amino-acid biosynthesis; L-methionine biosynthesis via de novo pathway; L-methionine from L-homocysteine (MetE route): step 1/1. Functionally, catalyzes the transfer of a methyl group from 5-methyltetrahydrofolate to homocysteine resulting in methionine formation. This chain is 5-methyltetrahydropteroyltriglutamate--homocysteine methyltransferase, found in Bordetella avium (strain 197N).